The sequence spans 342 residues: Methionine import ATP-binding protein MetN (342 aa).

Residues 2-241 (ITLEQVTKIY…PQQPITKRFV (240 aa)) form the ABC transporter domain. 38–45 (GYSGAGKS) serves as a coordination point for ATP.

The protein belongs to the ABC transporter superfamily. Methionine importer (TC 3.A.1.24) family. The complex is composed of two ATP-binding proteins (MetN), two transmembrane proteins (MetI) and a solute-binding protein (MetQ).

The protein resides in the cell membrane. The enzyme catalyses L-methionine(out) + ATP + H2O = L-methionine(in) + ADP + phosphate + H(+). It carries out the reaction D-methionine(out) + ATP + H2O = D-methionine(in) + ADP + phosphate + H(+). Functionally, part of the ABC transporter complex MetNIQ involved in methionine import. Responsible for energy coupling to the transport system. The protein is Methionine import ATP-binding protein MetN of Geobacillus kaustophilus (strain HTA426).